A 117-amino-acid polypeptide reads, in one-letter code: Cell division protein FtsB (117 aa).

At 1–6 (MRDWRW) the chain is on the cytoplasmic side. Residues 7 to 24 (MLLVLALLLGWLQYRFWF) form a helical membrane-spanning segment. The Periplasmic portion of the chain corresponds to 25–117 (GPGNSGEVMM…QVGEHPADVP (93 aa)). Residues 29 to 69 (SGEVMMLEAQVTNQERDNEGLQQRNDALAAEVKDLKEGQSA) are a coiled coil.

It belongs to the FtsB family. As to quaternary structure, part of a complex composed of FtsB, FtsL and FtsQ.

The protein localises to the cell inner membrane. Its function is as follows. Essential cell division protein. May link together the upstream cell division proteins, which are predominantly cytoplasmic, with the downstream cell division proteins, which are predominantly periplasmic. This Stenotrophomonas maltophilia (strain R551-3) protein is Cell division protein FtsB.